Consider the following 578-residue polypeptide: Matrix metalloproteinase-17 (578 aa).

Disordered regions lie at residues 1 to 22 (MGRR…PGPG) and 107 to 133 (PRCS…TKWS). The first 39 residues, 1 to 39 (MGRRPRGPGSPRGPGPPRPGPGLPPLLLVLALAAHGGCA), serve as a signal peptide directing secretion. The segment covering 11-22 (PRGPGPPRPGPG) has biased composition (pro residues). Positions 40-124 (APAPRAEDLS…PPGAQSRRKR (85 aa)) are excised as a propeptide. The Cysteine switch signature appears at 107–114 (PRCSLPDL). Cys109 contacts Zn(2+). N-linked (GlcNAc...) asparagine glycosylation occurs at Asn136. His247 contacts Zn(2+). The active site involves Glu248. Residues His251 and His257 each coordinate Zn(2+). Residues 301-334 (PTAQLDTPEPEEPPLLPEPPNNRSSTPPQKDVPH) form a disordered region. N-linked (GlcNAc...) asparagine glycosylation occurs at Asn322. Hemopexin repeat units lie at residues 333 to 382 (PHRC…WRGL), 386 to 432 (LDSV…SLPP), 436 to 479 (DAVF…WRGV), and 480 to 527 (PSML…WLVC). Cys336 and Cys527 are joined by a disulfide. Ser558 carries GPI-anchor amidated serine lipidation. Residues 559–578 (DAHRLALPSLLLLTPLLWGL) constitute a propeptide, removed in mature form.

It belongs to the peptidase M10A family. Requires Zn(2+) as cofactor. The cofactor is Ca(2+). The precursor is cleaved by a furin endopeptidase. Expressed by monocytes and macrophages.

The protein localises to the cell membrane. It is found in the secreted. It localises to the extracellular space. The protein resides in the extracellular matrix. Endopeptidase that degrades various components of the extracellular matrix, such as fibrin. May be involved in the activation of membrane-bound precursors of growth factors or inflammatory mediators, such as tumor necrosis factor-alpha. May also be involved in tumoral process. Not obvious if able to proteolytically activate progelatinase A. Does not hydrolyze collagen types I, II, III, IV and V, gelatin, fibronectin, laminin, decorin nor alpha1-antitrypsin. This is Matrix metalloproteinase-17 (Mmp17) from Mus musculus (Mouse).